Consider the following 155-residue polypeptide: Large ribosomal subunit protein eL24 (155 aa).

The span at 98 to 129 shows a compositional bias: basic and acidic residues; it reads PEVRKAKRDDKAKADKEKKKADKAARKAEKAK. The interval 98 to 155 is disordered; it reads PEVRKAKRDDKAKADKEKKKADKAARKAEKAKLAAAQGSKVSKQQAKGAFQKVAATSR.

Belongs to the eukaryotic ribosomal protein eL24 family.

The protein is Large ribosomal subunit protein eL24 (RPL24) of Candida glabrata (strain ATCC 2001 / BCRC 20586 / JCM 3761 / NBRC 0622 / NRRL Y-65 / CBS 138) (Yeast).